A 270-amino-acid chain; its full sequence is Glutamate 5-kinase (270 aa).

Lys-15 lines the ATP pocket. Substrate is bound by residues Ser-55, Asp-142, and Asn-158. ATP is bound by residues 178-179 (SD) and 220-226 (TGGMLSK).

Belongs to the glutamate 5-kinase family.

The protein localises to the cytoplasm. It catalyses the reaction L-glutamate + ATP = L-glutamyl 5-phosphate + ADP. Its pathway is amino-acid biosynthesis; L-proline biosynthesis; L-glutamate 5-semialdehyde from L-glutamate: step 1/2. Catalyzes the transfer of a phosphate group to glutamate to form L-glutamate 5-phosphate. The polypeptide is Glutamate 5-kinase (Streptococcus uberis (strain ATCC BAA-854 / 0140J)).